The sequence spans 155 residues: Molybdopterin synthase catalytic subunit 1 (155 aa).

Substrate contacts are provided by residues 101-102, lysine 117, and 124-126; these read HR and KKE.

This sequence belongs to the MoaE family. MOCS2B subfamily. As to quaternary structure, heterotetramer; composed of 2 small (MOCS2A) and 2 large (MOCS2B) subunits.

The protein localises to the cytoplasm. The enzyme catalyses 2 [molybdopterin-synthase sulfur-carrier protein]-C-terminal-Gly-aminoethanethioate + cyclic pyranopterin phosphate + H2O = molybdopterin + 2 [molybdopterin-synthase sulfur-carrier protein]-C-terminal Gly-Gly + 2 H(+). Its pathway is cofactor biosynthesis; molybdopterin biosynthesis. Catalytic subunit of the molybdopterin synthase complex, a complex that catalyzes the conversion of precursor Z into molybdopterin. Acts by mediating the incorporation of 2 sulfur atoms from thiocarboxylated MOCS2A into precursor Z to generate a dithiolene group. This is Molybdopterin synthase catalytic subunit 1 from Aedes aegypti (Yellowfever mosquito).